We begin with the raw amino-acid sequence, 474 residues long: Hepatocyte nuclear factor 4-alpha (474 aa).

The nuclear receptor DNA-binding region spans 57–132 (SALCAICGDR…AGMKKEAVQN (76 aa)). NR C4-type zinc fingers lie at residues 60 to 80 (CAIC…CDGC) and 96 to 120 (CRFS…LKKC). Residues S142 and S143 each carry the phosphoserine modification. Phosphotyrosine is present on Y144. Residues 147–377 (SSLPSINALL…NLLQEMLLGG (231 aa)) enclose the NR LBD domain. T166 is subject to Phosphothreonine. S167 is modified (phosphoserine). Residues K234 and K307 each participate in a glycyl lysine isopeptide (Lys-Gly) (interchain with G-Cter in ubiquitin) cross-link. Position 313 is a phosphoserine; by AMPK (S313). A 9aaTAD motif is present at residues 368-376 (NLLQEMLLG). Residues 419 to 447 (EWPRPRGQAATPETPQPSPPGGSGSEPYK) form a disordered region. Phosphothreonine is present on residues T429 and T432. S436 bears the Phosphoserine mark. K458 is subject to N6-acetyllysine.

The protein belongs to the nuclear hormone receptor family. NR2 subfamily. As to quaternary structure, homodimerization is required for HNF4-alpha to bind to its recognition site. Interacts with CLOCK, BMAL1, CRY1, CRY2, PER1 and PER2. Interacts with NR0B2/SHP; the resulting heterodimer is transcriptionally inactive. Interacts with DDX3X; this interaction disrupts the interaction between HNF4 and NR0B2 that forms inactive heterodimers and enhances the formation of active HNF4 homodimers. In terms of processing, phosphorylated on tyrosine residue(s); phosphorylation is important for its DNA-binding activity. Phosphorylation may directly or indirectly play a regulatory role in the subnuclear distribution. Phosphorylation at Ser-313 by AMPK reduces the ability to form homodimers and bind DNA. Post-translationally, acetylation at Lys-458 lowers transcriptional activation by about two-fold.

The protein resides in the nucleus. Transcriptional regulator which controls the expression of hepatic genes during the transition of endodermal cells to hepatic progenitor cells, facilitating the recruitment of RNA pol II to the promoters of target genes. Activates the transcription of CYP2C38. Represses the CLOCK-BMAL1 transcriptional activity and is essential for circadian rhythm maintenance and period regulation in the liver and colon cells. The sequence is that of Hepatocyte nuclear factor 4-alpha (HNF4A) from Homo sapiens (Human).